A 201-amino-acid chain; its full sequence is Thylakoid membrane protein slr1796 (201 aa).

Residues phenylalanine 16–phenylalanine 36 form a helical membrane-spanning segment.

The protein resides in the cellular thylakoid membrane. In Synechocystis sp. (strain ATCC 27184 / PCC 6803 / Kazusa), this protein is Thylakoid membrane protein slr1796.